The chain runs to 209 residues: MSSGANATTIDVPETRAEAKGKAPLIAAPIVATTKATPHPNAGWKKGLAIFDFLLRLAAIAATLAAATTMGTTDETLPFFTQFFQFQASFDDLPAFMFFVVATAIASGYLALSLPFSLVSIFRPHAQGIRLLLIISDTVMLALTTAGAASATAIVYLAHNGDSSANWIAICQQFTDFCQSVSGAVVASFIAVVIFMLLVMMSALALRKH.

Residues 1–46 (MSSGANATTIDVPETRAEAKGKAPLIAAPIVATTKATPHPNAGWKK) are Cytoplasmic-facing. The chain crosses the membrane as a helical span at residues 47 to 67 (GLAIFDFLLRLAAIAATLAAA). At 68-95 (TTMGTTDETLPFFTQFFQFQASFDDLPA) the chain is on the extracellular side. A helical transmembrane segment spans residues 96–116 (FMFFVVATAIASGYLALSLPF). The Cytoplasmic segment spans residues 117–137 (SLVSIFRPHAQGIRLLLIISD). The chain crosses the membrane as a helical span at residues 138-158 (TVMLALTTAGAASATAIVYLA). Topologically, residues 159–183 (HNGDSSANWIAICQQFTDFCQSVSG) are extracellular. Residues 184-204 (AVVASFIAVVIFMLLVMMSAL) form a helical membrane-spanning segment. At 205–209 (ALRKH) the chain is on the cytoplasmic side.

This sequence belongs to the Casparian strip membrane proteins (CASP) family. In terms of assembly, homodimer and heterodimers.

The protein resides in the cell membrane. Its function is as follows. Regulates membrane-cell wall junctions and localized cell wall deposition. Required for establishment of the Casparian strip membrane domain (CSD) and the subsequent formation of Casparian strips, a cell wall modification of the root endodermis that determines an apoplastic barrier between the intraorganismal apoplasm and the extraorganismal apoplasm and prevents lateral diffusion. The sequence is that of Casparian strip membrane protein 1 from Vitis vinifera (Grape).